Here is a 104-residue protein sequence, read N- to C-terminus: Replication restart protein PriB (104 aa).

One can recognise an SSB domain in the interval 1 to 101; the sequence is MTNRLALSGT…LHAEQIELID (101 aa).

The protein belongs to the PriB family. In terms of assembly, homodimer. Interacts with PriA and DnaT. Component of the replication restart primosome. Primosome assembly occurs via a 'hand-off' mechanism. PriA binds to replication forks, subsequently PriB then DnaT bind; DnaT then displaces ssDNA to generate the helicase loading substrate.

Involved in the restart of stalled replication forks, which reloads the replicative helicase on sites other than the origin of replication; the PriA-PriB pathway is the major replication restart pathway. During primosome assembly it facilitates complex formation between PriA and DnaT on DNA; stabilizes PriA on DNA. Stimulates the DNA unwinding activity of PriA helicase. The chain is Replication restart protein PriB from Citrobacter koseri (strain ATCC BAA-895 / CDC 4225-83 / SGSC4696).